Consider the following 392-residue polypeptide: Copper-containing nitrite reductase (392 aa).

The N-terminal stretch at 1 to 18 (MKRQALAAMIASLFALAA) is a signal peptide. Residue C19 is the site of N-palmitoyl cysteine attachment. C19 carries the S-diacylglycerol cysteine lipid modification. The segment at 30–49 (ETPAASAEAASSAAQATAET) is disordered. 2 Plastocyanin-like domains span residues 101 to 195 (WTFD…ILVE) and 245 to 346 (GHVG…LKVE). Cu cation contacts are provided by H134, H139, H174, C175, H183, and M188. Position 139 (H139) interacts with substrate. H280 is a binding site for substrate. H329 provides a ligand contact to Cu cation. The segment at 367 to 392 (GAASAPAASAPAASAPAASASEKSVY) is disordered. 4 tandem repeats follow at residues 368–372 (AASAP), 373–377 (AASAP), 378–382 (AASAP), and 383–387 (AASAS). Positions 368–387 (AASAPAASAPAASAPAASAS) are 4 X 5 AA tandem repeats of A-A-S-A-P.

The protein belongs to the multicopper oxidase family. As to quaternary structure, homotrimer. Cu(+) serves as cofactor. Cu(2+) is required as a cofactor. In terms of processing, palmitoylated.

It localises to the cell outer membrane. It carries out the reaction nitric oxide + Fe(III)-[cytochrome c] + H2O = Fe(II)-[cytochrome c] + nitrite + 2 H(+). In terms of biological role, catalyzes the reduction of nitrite to nitric oxide (NO), probably with azurin as electron donor. Essential for growth and survival in oxygen-depleted environments. Can also provide protection against killing by normal human sera. The polypeptide is Copper-containing nitrite reductase (aniA) (Neisseria gonorrhoeae).